The primary structure comprises 636 residues: 1-deoxy-D-xylulose-5-phosphate synthase (636 aa).

Thiamine diphosphate is bound by residues histidine 72 and 113–115 (GHA). Aspartate 144 contacts Mg(2+). Thiamine diphosphate is bound by residues 145 to 146 (GA), asparagine 174, tyrosine 287, and glutamate 370. Residue asparagine 174 participates in Mg(2+) binding.

This sequence belongs to the transketolase family. DXPS subfamily. As to quaternary structure, homodimer. Mg(2+) is required as a cofactor. It depends on thiamine diphosphate as a cofactor.

The enzyme catalyses D-glyceraldehyde 3-phosphate + pyruvate + H(+) = 1-deoxy-D-xylulose 5-phosphate + CO2. It participates in metabolic intermediate biosynthesis; 1-deoxy-D-xylulose 5-phosphate biosynthesis; 1-deoxy-D-xylulose 5-phosphate from D-glyceraldehyde 3-phosphate and pyruvate: step 1/1. Its function is as follows. Catalyzes the acyloin condensation reaction between C atoms 2 and 3 of pyruvate and glyceraldehyde 3-phosphate to yield 1-deoxy-D-xylulose-5-phosphate (DXP). The protein is 1-deoxy-D-xylulose-5-phosphate synthase of Microcystis aeruginosa (strain NIES-843 / IAM M-2473).